Here is a 637-residue protein sequence, read N- to C-terminus: Biosynthetic arginine decarboxylase (637 aa).

Lys101 carries the post-translational modification N6-(pyridoxal phosphate)lysine. Phe286–Tyr296 is a binding site for substrate.

It belongs to the Orn/Lys/Arg decarboxylase class-II family. SpeA subfamily. Requires Mg(2+) as cofactor. Pyridoxal 5'-phosphate serves as cofactor.

It catalyses the reaction L-arginine + H(+) = agmatine + CO2. It participates in amine and polyamine biosynthesis; agmatine biosynthesis; agmatine from L-arginine: step 1/1. Its function is as follows. Catalyzes the biosynthesis of agmatine from arginine. The chain is Biosynthetic arginine decarboxylase from Shewanella sp. (strain MR-7).